We begin with the raw amino-acid sequence, 307 residues long: Formate hydrogenlyase subunit 4 (307 aa).

Topologically, residues 1 to 2 are periplasmic; sequence MS. The helical transmembrane segment at 3 to 23 threads the bilayer; that stretch reads VLYPLIQALVLFAVAPLLSGI. Residues 24–67 lie on the Cytoplasmic side of the membrane; that stretch reads TRVARARLHNRRGPGVLQEYRDIIKLLGRQSVGPDASGWVFRLT. The helical transmembrane segment at 68–88 threads the bilayer; that stretch reads PYVMVGVMLTIATALPVVTVG. Topologically, residues 89–93 are periplasmic; that stretch reads SPLPQ. A helical transmembrane segment spans residues 94–114; that stretch reads LGDLITLLYLFAIARFFFAIS. Residues 115-131 are Cytoplasmic-facing; sequence GLDTGSPFTAIGASREA. Residues 132–152 form a helical membrane-spanning segment; that stretch reads MLGVLVEPMLLLGLWVAAQVA. Residues 153 to 167 lie on the Periplasmic side of the membrane; sequence GSTNISNITDTVYHW. The chain crosses the membrane as a helical span at residues 168–188; that stretch reads PLSQSIPLVLALCACAFATFI. The Cytoplasmic segment spans residues 189 to 221; the sequence is EMGKLPFDLAEAEQELQEGPLSEYSGSGFGVMK. A helical transmembrane segment spans residues 222-242; the sequence is WGISLKQLVVLQMFVGVFIPW. Topologically, residues 243-253 are periplasmic; sequence GQMETFTAGGL. Residues 254-274 form a helical membrane-spanning segment; that stretch reads LLALVIAIVKLVVGVLVIALF. At 275-284 the chain is on the cytoplasmic side; that stretch reads ENSMARLRLD. Residues 285–305 traverse the membrane as a helical segment; the sequence is ITPRITWAGFGFAFLAFVSLL. The Periplasmic segment spans residues 306–307; it reads AA.

This sequence belongs to the complex I subunit 1 family. As to quaternary structure, FHL comprises of a formate dehydrogenase, unidentified electron carriers and a hydrogenase (isoenzyme 3). In this non-energy conserving pathway molecular hydrogen and carbodioxide from formate are released.

The protein localises to the cell inner membrane. This chain is Formate hydrogenlyase subunit 4 (hycD), found in Escherichia coli (strain K12).